The following is a 261-amino-acid chain: Acetylglutamate kinase (261 aa).

Substrate contacts are provided by residues 46-47 (GG), Arg-68, and Asn-160.

The protein belongs to the acetylglutamate kinase family. ArgB subfamily.

It localises to the cytoplasm. It catalyses the reaction N-acetyl-L-glutamate + ATP = N-acetyl-L-glutamyl 5-phosphate + ADP. Its pathway is amino-acid biosynthesis; L-arginine biosynthesis; N(2)-acetyl-L-ornithine from L-glutamate: step 2/4. Its function is as follows. Catalyzes the ATP-dependent phosphorylation of N-acetyl-L-glutamate. This Shewanella loihica (strain ATCC BAA-1088 / PV-4) protein is Acetylglutamate kinase.